A 202-amino-acid chain; its full sequence is Nigerythrin (202 aa).

One can recognise a Ferritin-like diiron domain in the interval 23 to 168 (KTAVGSTLEN…AYNDIDAPDD (146 aa)). Fe cation contacts are provided by E40, E73, E115, E118, E149, H152, C174, C177, C189, and C192. The Rubredoxin-like domain occupies 169-202 (DKFHLCPICGYIHKGEDFEKCPICFRPKDTFTAY).

In terms of assembly, homodimer. May possess two rubredoxin-like centers and two hemerythrin-like binuclear-iron centers per dimer.

Its subcellular location is the cytoplasm. Functionally, exhibits NADH peroxidase activity (in vitro). The chain is Nigerythrin (ngr) from Nitratidesulfovibrio vulgaris (strain ATCC 29579 / DSM 644 / CCUG 34227 / NCIMB 8303 / VKM B-1760 / Hildenborough) (Desulfovibrio vulgaris).